The chain runs to 150 residues: Large ribosomal subunit protein uL13 (150 aa).

Residues 130-150 (EHPHSAQNPQVLSITTNELVK) form a disordered region. The span at 134–150 (SAQNPQVLSITTNELVK) shows a compositional bias: polar residues.

This sequence belongs to the universal ribosomal protein uL13 family. Part of the 50S ribosomal subunit.

Its function is as follows. This protein is one of the early assembly proteins of the 50S ribosomal subunit, although it is not seen to bind rRNA by itself. It is important during the early stages of 50S assembly. The chain is Large ribosomal subunit protein uL13 from Prochlorococcus marinus (strain SARG / CCMP1375 / SS120).